Reading from the N-terminus, the 404-residue chain is Ubiquitin-like modifier-activating enzyme 5 (404 aa).

G83, D104, K127, N150, and N184 together coordinate ATP. Positions 226 and 229 each coordinate Zn(2+). C250 (glycyl thioester intermediate) is an active-site residue. C303 and C308 together coordinate Zn(2+). Residues A372 to S393 form a disordered region. Over residues E382 to E391 the composition is skewed to low complexity.

Belongs to the ubiquitin-activating E1 family. UBA5 subfamily.

In terms of biological role, E1-like enzyme which activates UFM1. This is Ubiquitin-like modifier-activating enzyme 5 from Drosophila sechellia (Fruit fly).